Here is a 514-residue protein sequence, read N- to C-terminus: Cholesterol side-chain cleavage enzyme, mitochondrial (514 aa).

A mitochondrion-targeting transit peptide spans 1–39 (MMVSWSVCRSSLALPACGLPSARHNSSMPVVRQALSPDN). Position 458 (Cys458) interacts with heme.

This sequence belongs to the cytochrome P450 family. The cofactor is heme. As to expression, in the ovary, not found in early vitellogenic follicles, barely detected in postvitellogenic follicles and abundant in post-ovulatory follicles.

The protein resides in the mitochondrion inner membrane. It carries out the reaction 6 reduced [adrenodoxin] + cholesterol + 3 O2 + 6 H(+) = 4-methylpentanal + pregnenolone + 6 oxidized [adrenodoxin] + 4 H2O. Its pathway is lipid metabolism; C21-steroid hormone metabolism. Its function is as follows. Catalyzes the side-chain cleavage reaction of cholesterol to pregnenolone, the precursor of most steroid hormones. This is Cholesterol side-chain cleavage enzyme, mitochondrial (cyp11a1) from Oncorhynchus mykiss (Rainbow trout).